Here is a 100-residue protein sequence, read N- to C-terminus: Small ribosomal subunit protein bS20 (100 aa).

Residues 1–22 show a composition bias toward basic residues; that stretch reads MASGKPKKKNPRLASGRKRARQ. The interval 1–26 is disordered; sequence MASGKPKKKNPRLASGRKRARQGLKL.

It belongs to the bacterial ribosomal protein bS20 family.

In terms of biological role, binds directly to 16S ribosomal RNA. The polypeptide is Small ribosomal subunit protein bS20 (Acidovorax ebreus (strain TPSY) (Diaphorobacter sp. (strain TPSY))).